Reading from the N-terminus, the 681-residue chain is U3 small nucleolar ribonucleoprotein protein MPP10 (681 aa).

Phosphoserine occurs at positions 61, 120, and 139. Over residues 105–147 (SLLPESEEQEREEDGSEIEADDKEDLEDLEEEEVSDMGNDDPE) the composition is skewed to acidic residues. Disordered stretches follow at residues 105-202 (SLLP…IVDD) and 216-364 (NIEK…EKRQ). Positions 109–138 (ESEEQEREEDGSEIEADDKEDLEDLEEEEV) form a coiled coil. Over residues 148–162 (MGERAENSSKSDLRK) the composition is skewed to basic and acidic residues. Phosphoserine occurs at positions 163, 167, and 171. Residues 180–190 (LEQQSKVQNKG) show a composition bias toward polar residues. Basic and acidic residues-rich tracts occupy residues 193–202 (KPREKSIVDD) and 216–226 (NIEKEEERKDD). The stretch at 205–239 (FKLSEMEAYLENIEKEEERKDDNDEEEEDIDFFED) forms a coiled coil. Over residues 227–247 (NDEEEEDIDFFEDIDSDEDEG) the composition is skewed to acidic residues. Phosphoserine is present on S242. A compositionally biased stretch (basic residues) spans 253–264 (KKLKSGKSSRNL). A phosphoserine mark is found at S275 and S289. The span at 280–290 (TNVHDDELDSN) shows a compositional bias: basic and acidic residues. Coiled coils occupy residues 284-324 (DDEL…NKQH) and 348-382 (NVKKNSDEVKSSFEKRQEKMNEKIASLEKELLEKK). Residues 291–318 (KEDDEIAEEEAEELSISETDEDDDLQEN) are compositionally biased toward acidic residues. A compositionally biased stretch (basic and acidic residues) spans 319–329 (EDNKQHKESLK). Residue K350 forms a Glycyl lysine isopeptide (Lys-Gly) (interchain with G-Cter in SUMO2) linkage. Positions 351 to 364 (KNSDEVKSSFEKRQ) are enriched in basic and acidic residues. Residues K382 and K394 each participate in a glycyl lysine isopeptide (Lys-Gly) (interchain with G-Cter in SUMO2) cross-link. Residues 469–490 (LAEIYEQEYIKLNQQKTAEEEN) adopt a coiled-coil conformation. Residue K555 forms a Glycyl lysine isopeptide (Lys-Gly) (interchain with G-Cter in SUMO2) linkage. Residues 558–575 (NKAGDIKTAAEKTATDKK) show a composition bias toward basic and acidic residues. The tract at residues 558-606 (NKAGDIKTAAEKTATDKKRERRKKKYQKRMKIKEKEKRRKLLEKSSVDQ) is disordered. The stretch at 574-604 (KKRERRKKKYQKRMKIKEKEKRRKLLEKSSV) forms a coiled coil. Positions 576–598 (RERRKKKYQKRMKIKEKEKRRKL) are enriched in basic residues. The residue at position 609 (K609) is an N6-acetyllysine. Residues K632 and K649 each participate in a glycyl lysine isopeptide (Lys-Gly) (interchain with G-Cter in SUMO2) cross-link. A coiled-coil region spans residues 648–670 (SKLQDQVKMQINDAKKTEKKKKK). A disordered region spans residues 660 to 681 (DAKKTEKKKKKRQDISVHKLKL). Residues 672–681 (QDISVHKLKL) are compositionally biased toward basic and acidic residues.

Belongs to the MPP10 family. Part of the small subunit (SSU) processome, composed of more than 70 proteins and the RNA chaperone small nucleolar RNA (snoRNA) U3. Component of a heterotrimeric complex containing IMP3, IMP4 and MPHOSPH10. Interacts with IMP3 and IMP4. Phosphorylated in M (mitotic) phase.

It localises to the nucleus. It is found in the nucleolus. The protein resides in the chromosome. Its function is as follows. Component of the 60-80S U3 small nucleolar ribonucleoprotein (U3 snoRNP). Required for the early cleavages during pre-18S ribosomal RNA processing. Part of the small subunit (SSU) processome, first precursor of the small eukaryotic ribosomal subunit. During the assembly of the SSU processome in the nucleolus, many ribosome biogenesis factors, an RNA chaperone and ribosomal proteins associate with the nascent pre-rRNA and work in concert to generate RNA folding, modifications, rearrangements and cleavage as well as targeted degradation of pre-ribosomal RNA by the RNA exosome. This chain is U3 small nucleolar ribonucleoprotein protein MPP10, found in Homo sapiens (Human).